The primary structure comprises 798 residues: Integrin beta-1 (798 aa).

The signal sequence occupies residues 1–20 (MNLQPIFWIGLISSICCVFA). The 51-residue stretch at 26–76 (RCLKANAKSCGECIQAGPNCGWCTNSTFLQEGMPTSARCDDLEALKKKGCP) folds into the PSI domain. Disulfide bonds link Cys27–Cys45, Cys35–Cys464, Cys38–Cys64, Cys48–Cys75, Cys207–Cys213, Cys261–Cys301, Cys401–Cys415, Cys435–Cys462, Cys466–Cys486, Cys477–Cys489, Cys491–Cys500, Cys502–Cys533, Cys516–Cys531, Cys525–Cys536, Cys538–Cys553, Cys555–Cys576, Cys560–Cys574, Cys568–Cys579, Cys581–Cys590, Cys592–Cys615, Cys599–Cys613, Cys607–Cys618, Cys620–Cys630, Cys633–Cys636, Cys640–Cys691, Cys646–Cys665, Cys649–Cys661, and Cys699–Cys723. Asn50 carries N-linked (GlcNAc...) asparagine glycosylation. Residues 75–107 (CPPDDIENPRGSKDIKKNKNVTNRSKGTAEKLK) are disordered. A compositionally biased stretch (basic and acidic residues) spans 81 to 91 (ENPRGSKDIKK). Residues Asn94 and Asn97 are each glycosylated (N-linked (GlcNAc...) asparagine). The 239-residue stretch at 140–378 (DYPIDLYYLM…QLIIDAYNSL (239 aa)) folds into the VWFA domain. 2 residues coordinate Mg(2+): Ser152 and Ser154. Ca(2+) is bound by residues Ser154, Asp157, Asp158, and Glu189. Positions 207–213 (CTSEQNC) are CX3CL1-binding. An N-linked (GlcNAc...) asparagine glycan is attached at Asn212. Residues Asn244, Asp246, Pro248, and Glu249 each contribute to the Ca(2+) site. Glu249 is a Mg(2+) binding site. Asn269 carries an N-linked (GlcNAc...) asparagine glycan. The tract at residues 295–314 (LPNDGQCHLENNMYTMSHYY) is CX3CL1-binding. Ala362 contacts Ca(2+). 3 N-linked (GlcNAc...) asparagine glycosylation sites follow: Asn363, Asn406, and Asn417. Positions 383–465 (ILENSKLSEG…VILQYICECE (83 aa)) are interaction with TMEM182. I-EGF domains are found at residues 466-501 (CQSE…RHCE), 502-554 (CSTD…KFCE), 555-591 (CDNF…SACD), and 592-631 (CSLD…QTCE). N-linked (GlcNAc...) asparagine glycosylation occurs at Asn481. N-linked (GlcNAc...) asparagine glycosylation occurs at Asn520. Asn584 carries N-linked (GlcNAc...) asparagine glycosylation. Asn669 carries an N-linked (GlcNAc...) asparagine glycan. The chain crosses the membrane as a helical span at residues 729-749 (IIPIVAGVVAGIVLIGLALLL). The segment at 762 to 767 (EFAKFE) is signal for sorting from recycling endosomes; interaction with ACAP1. Phosphothreonine is present on Thr777. Residue Tyr783 is modified to Phosphotyrosine. Phosphoserine is present on Ser785. The tract at residues 785 to 792 (SAVTTVVN) is interaction with ITGB1BP1. Thr789 bears the Phosphothreonine mark. Residue Lys794 is modified to N6-acetyllysine; alternate. Lys794 participates in a covalent cross-link: Glycyl lysine isopeptide (Lys-Gly) (interchain with G-Cter in SUMO1); alternate.

It belongs to the integrin beta chain family. In terms of assembly, interacts with seprase FAP (seprase); the interaction occurs at the cell surface of invadopodia membrane in a collagen-dependent manner. Heterodimer of an alpha and a beta subunit. Beta-1 associates with either alpha-1, alpha-2, alpha-3, alpha-4, alpha-5, alpha-6, alpha-7, alpha-8, alpha-9, alpha-10, alpha-11 or alpha-V. ITGA6:ITGB1 is found in a complex with CD9; interaction takes place in oocytes and is involved in sperm-egg fusion. Binds LGALS3BP and NMRK2, when associated with alpha-7, but not with alpha-5. Interacts with FLNA, FLNB, FLNC and RANBP9. Interacts with KRT1 in the presence of RACK1 and SRC. Interacts with JAML; integrin alpha-4/beta-1 may regulate leukocyte to endothelial cells adhesion by controlling JAML homodimerization. Interacts with RAB21. Interacts (via the cytoplasmic region) with RAB25 (via the hypervariable C-terminal region). Interacts with MYO10. Interacts with ITGB1BP1 (via C-terminal region); the interaction is a prerequisite for focal adhesion disassembly. Interacts with TLN1; the interaction is prevented by competitive binding of ITGB1BP1. Interacts with ACAP1; required for ITGB1 recycling. Interacts with ASAP3. Interacts with FERMT2; the interaction is inhibited in presence of ITGB1BP1. Interacts with DAB2. Interacts with FGR and HCK. Interacts with alpha-7A and alpha-7B in adult skeletal muscle. Interacts with alpha-7B in cardiomyocytes of adult heart. Interacts with EMP2; the interaction may be direct or indirect and ITGB1 has a heterodimer form. ITGA5:ITGB1 interacts with CCN3. ITGA4:ITGB1 is found in a ternary complex with CX3CR1 and CX3CL1. ITGA5:ITGB1 interacts with FBN1. ITGA5:ITGB1 acts as a receptor for fibronectin FN1 and mediates R-G-D-dependent cell adhesion to FN1. ITGA5:ITGB1 interacts with IL1B. Interacts with MDK. ITGA4:ITGB1 interacts with MDK; this interaction mediates MDK-induced osteoblast cells migration through PXN phosphorylation. ITGA6:ITGB1 interacts with MDK; this interaction mediates MDK-induced neurite-outgrowth. ITGA5:ITGB1 interacts with ACE2. Interacts with TMEM182 and LAMB1. Interacts with tensin TNS3; TNS3 also interacts with PEAK1, thus acting as an adapter molecule to bridge the association of PEAK1 with ITGB1. Interacts with tensin TNS4; the interaction displaces tensin TNS3 from the ITGB1 cytoplasmic tail and promotes ITGB1 stability. Integrin ITGA9:ITGB1 interacts with SPP1/OPN (via N-terminus). Integrin ITGA9:ITGB1 interacts with TNC/TNFN3 (via the 3rd Fibronectin type-III domain). Integrins ITGA4:ITGB1 and ITGA9:ITGB1 interact with SVEP1 (via Sushi domain 21); thereby inhibit Ca(2+) intracellular signaling and as a result repress vasocontraction. ITGA4:ITGB1 and ITGA5:ITGB1 interacts with SELP. Interacts with CD248. ITGA5:ITGB1 interacts with IGFBP1. ITGA4:ITGB1 interacts with BCAM. Interacts with ADGRG6.

The protein resides in the cell membrane. Its subcellular location is the cell projection. It is found in the invadopodium membrane. The protein localises to the ruffle membrane. It localises to the recycling endosome. The protein resides in the melanosome. Its subcellular location is the lamellipodium. It is found in the ruffle. The protein localises to the cell junction. It localises to the focal adhesion. Integrins alpha-1/beta-1, alpha-2/beta-1, alpha-10/beta-1 and alpha-11/beta-1 are receptors for collagen. Integrins alpha-1/beta-1 and alpha-2/beta-2 recognize the proline-hydroxylated sequence G-F-P-G-E-R in collagen. Integrins alpha-2/beta-1, alpha-3/beta-1, alpha-4/beta-1, alpha-5/beta-1, alpha-8/beta-1, alpha-10/beta-1, alpha-11/beta-1 and alpha-V/beta-1 are receptors for fibronectin. Alpha-4/beta-1 recognizes one or more domains within the alternatively spliced CS-1 and CS-5 regions of fibronectin. Integrin alpha-5/beta-1 is a receptor for fibrinogen. Integrin alpha-1/beta-1, alpha-2/beta-1, alpha-6/beta-1 and alpha-7/beta-1 are receptors for lamimin. Integrin alpha-6/beta-1 (ITGA6:ITGB1) is present in oocytes and is involved in sperm-egg fusion. Integrin alpha-4/beta-1 is a receptor for VCAM1 and recognizes the sequence Q-I-D-S in VCAM1. Integrin alpha-9/beta-1 is a receptor for VCAM1, cytotactin and osteopontin. It recognizes the sequence A-E-I-D-G-I-E-L in cytotactin. Integrin alpha-3/beta-1 is a receptor for epiligrin, thrombospondin and CSPG4. Integrin alpha-3/beta-1 provides a docking site for FAP (seprase) at invadopodia plasma membranes in a collagen-dependent manner and hence may participate in the adhesion, formation of invadopodia and matrix degradation processes, promoting cell invasion. Alpha-3/beta-1 may mediate with LGALS3 the stimulation by CSPG4 of endothelial cells migration. Integrin alpha-V/beta-1 is a receptor for vitronectin. Beta-1 integrins recognize the sequence R-G-D in a wide array of ligands. When associated with alpha-7/beta-1 integrin, regulates cell adhesion and laminin matrix deposition. Involved in promoting endothelial cell motility and angiogenesis. Involved in osteoblast compaction through the fibronectin fibrillogenesis cell-mediated matrix assembly process and the formation of mineralized bone nodules. May be involved in up-regulation of the activity of kinases such as PKC via binding to KRT1. Together with KRT1 and RACK1, serves as a platform for SRC activation or inactivation. Plays a mechanistic adhesive role during telophase, required for the successful completion of cytokinesis. ITGA4:ITGB1 binds to fractalkine (CX3CL1) and may act as its coreceptor in CX3CR1-dependent fractalkine signaling. ITGA4:ITGB1 and ITGA5:ITGB1 bind to PLA2G2A via a site (site 2) which is distinct from the classical ligand-binding site (site 1) and this induces integrin conformational changes and enhanced ligand binding to site 1. ITGA5:ITGB1 acts as a receptor for fibrillin-1 (FBN1) and mediates R-G-D-dependent cell adhesion to FBN1. ITGA5:ITGB1 is a receptor for IL1B and binding is essential for IL1B signaling. ITGA5:ITGB3 is a receptor for soluble CD40LG and is required for CD40/CD40LG signaling. Plays an important role in myoblast differentiation and fusion during skeletal myogenesis. ITGA9:ITGB1 may play a crucial role in SVEP1/polydom-mediated myoblast cell adhesion. Integrins ITGA9:ITGB1 and ITGA4:ITGB1 repress PRKCA-mediated L-type voltage-gated channel Ca(2+) influx and ROCK-mediated calcium sensitivity in vascular smooth muscle cells via their interaction with SVEP1, thereby inhibit vasocontraction. In Pongo abelii (Sumatran orangutan), this protein is Integrin beta-1 (ITGB1).